Here is a 165-residue protein sequence, read N- to C-terminus: 2-C-methyl-D-erythritol 2,4-cyclodiphosphate synthase (165 aa).

A divalent metal cation is bound by residues D9 and H11. Residues 9–11 (DVH) and 35–36 (HS) contribute to the 4-CDP-2-C-methyl-D-erythritol 2-phosphate site. Residue H43 participates in a divalent metal cation binding. Residues 57–59 (DIG), 101–107 (AQAPKML), 133–136 (TTTE), F140, and R143 contribute to the 4-CDP-2-C-methyl-D-erythritol 2-phosphate site.

Belongs to the IspF family. In terms of assembly, homotrimer. The cofactor is a divalent metal cation.

The enzyme catalyses 4-CDP-2-C-methyl-D-erythritol 2-phosphate = 2-C-methyl-D-erythritol 2,4-cyclic diphosphate + CMP. The protein operates within isoprenoid biosynthesis; isopentenyl diphosphate biosynthesis via DXP pathway; isopentenyl diphosphate from 1-deoxy-D-xylulose 5-phosphate: step 4/6. Functionally, involved in the biosynthesis of isopentenyl diphosphate (IPP) and dimethylallyl diphosphate (DMAPP), two major building blocks of isoprenoid compounds. Catalyzes the conversion of 4-diphosphocytidyl-2-C-methyl-D-erythritol 2-phosphate (CDP-ME2P) to 2-C-methyl-D-erythritol 2,4-cyclodiphosphate (ME-CPP) with a corresponding release of cytidine 5-monophosphate (CMP). The sequence is that of 2-C-methyl-D-erythritol 2,4-cyclodiphosphate synthase from Pseudoalteromonas translucida (strain TAC 125).